Here is a 726-residue protein sequence, read N- to C-terminus: Catalase-peroxidase (726 aa).

The interval Met1–Ser33 is disordered. The segment at residues Trp105–Tyr226 is a cross-link (tryptophyl-tyrosyl-methioninium (Trp-Tyr) (with M-252)). His106 serves as the catalytic Proton acceptor. The segment at residues Tyr226–Met252 is a cross-link (tryptophyl-tyrosyl-methioninium (Tyr-Met) (with W-105)). Residue His267 participates in heme b binding.

It belongs to the peroxidase family. Peroxidase/catalase subfamily. As to quaternary structure, homodimer or homotetramer. Heme b serves as cofactor. In terms of processing, formation of the three residue Trp-Tyr-Met cross-link is important for the catalase, but not the peroxidase activity of the enzyme.

The catalysed reaction is H2O2 + AH2 = A + 2 H2O. The enzyme catalyses 2 H2O2 = O2 + 2 H2O. Functionally, bifunctional enzyme with both catalase and broad-spectrum peroxidase activity. The chain is Catalase-peroxidase from Salmonella arizonae (strain ATCC BAA-731 / CDC346-86 / RSK2980).